The chain runs to 889 residues: Serine/threonine-protein kinase D3 (889 aa).

Phosphoserine is present on residues serine 27, serine 37, serine 41, and serine 44. The Phorbol-ester/DAG-type 1 zinc-finger motif lies at 154 to 204 (PHALYVHSYKAPTFCDYCGEMLWGLVRQGLKCEGCGLNYHKRCAFKIPNNC). Serine 213 and serine 216 each carry phosphoserine. The segment at 271–321 (PHTFAVHSYGRPTICQYCKRLLKGLFRQGMQCKDCKFNCHKRCASKVPRDC) adopts a Phorbol-ester/DAG-type 2 zinc-finger fold. Residues 336–370 (TDADMPMDIDSSDVNSDGSRGLDDSEEPSPPEDKM) form a disordered region. Phosphoserine is present on residues serine 346, serine 391, and serine 395. One can recognise a PH domain in the interval 416-532 (TVVKEGWMVH…WEKAIRQALM (117 aa)). Tyrosine 426 is modified (phosphotyrosine). Residue serine 442 is modified to Phosphoserine. At tyrosine 457 the chain carries Phosphotyrosine. Threonine 535 is subject to Phosphothreonine. Serine 539 is modified (phosphoserine). The Protein kinase domain maps to 575–831 (IFADEVLGSG…VDKSLSHPWL (257 aa)). ATP-binding positions include 581–589 (LGSGQFGIV) and lysine 604. The active-site Proton acceptor is aspartate 698. Residue serine 730 is modified to Phosphoserine; by PKC. The residue at position 734 (serine 734) is a Phosphoserine; by autocatalysis. The residue at position 741 (tyrosine 741) is a Phosphotyrosine.

The protein belongs to the protein kinase superfamily. CAMK Ser/Thr protein kinase family. PKD subfamily. Requires Mg(2+) as cofactor.

The protein resides in the cytoplasm. It localises to the membrane. It carries out the reaction L-seryl-[protein] + ATP = O-phospho-L-seryl-[protein] + ADP + H(+). The catalysed reaction is L-threonyl-[protein] + ATP = O-phospho-L-threonyl-[protein] + ADP + H(+). Its activity is regulated as follows. Activated by DAG and phorbol esters. Phorbol-ester/DAG-type domains 1 and 2 bind both DAG and phorbol ester with high affinity and mediate translocation to the cell membrane. Autophosphorylation of Ser-734 and phosphorylation of Ser-730 by PKC relieves auto-inhibition by the PH domain. In terms of biological role, converts transient diacylglycerol (DAG) signals into prolonged physiological effects, downstream of PKC. Involved in resistance to oxidative stress. In Mus musculus (Mouse), this protein is Serine/threonine-protein kinase D3 (Prkd3).